The following is a 322-amino-acid chain: 2-oxoglutarate-dependent dioxygenase caaD (322 aa).

The Fe2OG dioxygenase domain maps to Thr172–Asp279. 3 residues coordinate Fe cation: His200, Asp202, and His259. Arg269 lines the 2-oxoglutarate pocket.

The protein belongs to the iron/ascorbate-dependent oxidoreductase family. Requires Fe(2+) as cofactor.

The protein operates within secondary metabolite biosynthesis. 2-oxoglutarate-dependent dioxygenase; part of the gene cluster that produces the acyltetronic acid derivatives carlosic acid, agglomerin F and carlosic acid methyl ether. CaaD catalyzes the sequential oxidations of the terminal C-10 methyl group of the caaC product to form carboxylic acid which is necessary for the biosynthesis of agglomerin F. The protein is 2-oxoglutarate-dependent dioxygenase caaD of Aspergillus niger (strain ATCC MYA-4892 / CBS 513.88 / FGSC A1513).